Consider the following 175-residue polypeptide: Nicotinamide-nucleotide adenylyltransferase 1 (175 aa).

This sequence belongs to the archaeal NMN adenylyltransferase family.

It is found in the cytoplasm. The enzyme catalyses beta-nicotinamide D-ribonucleotide + ATP + H(+) = diphosphate + NAD(+). Its pathway is cofactor biosynthesis; NAD(+) biosynthesis; NAD(+) from nicotinamide D-ribonucleotide: step 1/1. The chain is Nicotinamide-nucleotide adenylyltransferase 1 from Sulfolobus acidocaldarius (strain ATCC 33909 / DSM 639 / JCM 8929 / NBRC 15157 / NCIMB 11770).